We begin with the raw amino-acid sequence, 144 residues long: Transcription antitermination protein NusB (144 aa).

It belongs to the NusB family.

In terms of biological role, involved in transcription antitermination. Required for transcription of ribosomal RNA (rRNA) genes. Binds specifically to the boxA antiterminator sequence of the ribosomal RNA (rrn) operons. The sequence is that of Transcription antitermination protein NusB from Streptococcus thermophilus (strain CNRZ 1066).